The sequence spans 328 residues: Probable G-protein coupled receptor 82 (328 aa).

The Extracellular portion of the chain corresponds to 1–11; sequence MTNNSTCIQPS. 2 N-linked (GlcNAc...) asparagine glycosylation sites follow: N3 and N4. Residues 12 to 32 form a helical membrane-spanning segment; that stretch reads VISTTALPVTYIFLFIIGLFG. At 33–55 the chain is on the cytoplasmic side; sequence NSLAQWVFLTKIGKKTSTHIYLA. The helical transmembrane segment at 56–76 threads the bilayer; it reads NLVTANLLVCTAMPFMGIYFL. Topologically, residues 77–92 are extracellular; sequence RGFYWKYQSVQCRLVN. A helical transmembrane segment spans residues 93-115; the sequence is FLGTLSMHVSMFVSLLILSWIAI. The Cytoplasmic segment spans residues 116 to 156; the sequence is SRYATLMKKESKQEATSCYERMFYGHVLKRFRQPNFARTMC. The helical transmembrane segment at 157-177 threads the bilayer; it reads IYIWGVVLVIIIPVTLYYSVV. Topologically, residues 178–197 are extracellular; it reads EATEEGQSQCYNRQMELGAR. A helical transmembrane segment spans residues 198 to 218; the sequence is PSQIAGLIGTTFIGFSFLVVV. Residues 219–251 lie on the Cytoplasmic side of the membrane; that stretch reads TSYYSLVSHLRRVRTCTSITEKDLTYRSVKRHL. A helical membrane pass occupies residues 252 to 272; that stretch reads LIIQVLLVVCFLPYSIFKPIF. The Extracellular portion of the chain corresponds to 273-328; the sequence is YVLHQREGDCQQLNYLIEAKNILTCLASARSSTDPIIFLLLDKTFKKTLYGLLTKS.

It belongs to the G-protein coupled receptor 1 family.

It localises to the cell membrane. Orphan receptor. This chain is Probable G-protein coupled receptor 82 (Gpr82), found in Mus musculus (Mouse).